We begin with the raw amino-acid sequence, 508 residues long: Ankyrin repeat domain-containing protein 34B (508 aa).

ANK repeat units lie at residues T9–E38, R42–I79, S83–L113, and S117–K146. The segment at P157–E185 is disordered. S260 is modified (phosphoserine). Position 269 is a phosphothreonine (T269). S293 bears the Phosphoserine mark. Residues G361 to Q370 show a composition bias toward polar residues. A disordered region spans residues G361–V380.

The protein belongs to the ANKRD34 family. In terms of processing, phosphorylated. In terms of tissue distribution, specifically and constitutively expressed in brain (at protein level).

Its subcellular location is the cytoplasm. It is found in the nucleus. This Mus musculus (Mouse) protein is Ankyrin repeat domain-containing protein 34B (Ankrd34b).